Reading from the N-terminus, the 282-residue chain is Putative hydrolase BceJ2315_61450 (282 aa).

Mg(2+) contacts are provided by E124, E126, and D155.

It belongs to the FAH family. The cofactor is Mg(2+).

This chain is Putative hydrolase BceJ2315_61450, found in Burkholderia cenocepacia (strain ATCC BAA-245 / DSM 16553 / LMG 16656 / NCTC 13227 / J2315 / CF5610) (Burkholderia cepacia (strain J2315)).